The primary structure comprises 490 residues: Cobyric acid synthase (490 aa).

A GATase cobBQ-type domain is found at 252-439; it reads RLKVVVPVLP…LHGLFESTAA (188 aa). Cys-333 functions as the Nucleophile in the catalytic mechanism. His-431 is an active-site residue.

It belongs to the CobB/CobQ family. CobQ subfamily.

Its pathway is cofactor biosynthesis; adenosylcobalamin biosynthesis. Its function is as follows. Catalyzes amidations at positions B, D, E, and G on adenosylcobyrinic A,C-diamide. NH(2) groups are provided by glutamine, and one molecule of ATP is hydrogenolyzed for each amidation. This chain is Cobyric acid synthase, found in Pseudomonas paraeruginosa (strain DSM 24068 / PA7) (Pseudomonas aeruginosa (strain PA7)).